A 184-amino-acid polypeptide reads, in one-letter code: Small ribosomal subunit protein uS4c (184 aa).

In terms of domain architecture, S4 RNA-binding spans 82-143 (MRLDNILFRL…KQRSKALIQN (62 aa)).

Belongs to the universal ribosomal protein uS4 family. Part of the 30S ribosomal subunit. Contacts protein S5. The interaction surface between S4 and S5 is involved in control of translational fidelity.

It is found in the plastid. The protein resides in the chloroplast. Its function is as follows. One of the primary rRNA binding proteins, it binds directly to 16S rRNA where it nucleates assembly of the body of the 30S subunit. Functionally, with S5 and S12 plays an important role in translational accuracy. In Patersonia fragilis (Short purple-flag), this protein is Small ribosomal subunit protein uS4c (rps4).